Consider the following 238-residue polypeptide: Probable transcriptional regulatory protein MGAS2096_Spy0287 (238 aa).

Belongs to the TACO1 family. YeeN subfamily.

The protein resides in the cytoplasm. This is Probable transcriptional regulatory protein MGAS2096_Spy0287 from Streptococcus pyogenes serotype M12 (strain MGAS2096).